A 486-amino-acid chain; its full sequence is MTFQAIATHPQDWTGDTLALGLTTAAIGETLSSELQKLDQQWNGVLQELISDSEFKAKLAETTTTRIGGSIRKLILVGLGESPTTEDYRRAAAAVAKQARSFKSQTLAIAFPPSDDPAAIASAIVEGISLALYKDQRFKSEPDTASGPSSIELLGLAGQEAAIARAEQVVAGVELARQLVAAPANVVTPVTMADTAQELAAELGLELEILEADECEKRGMGAVLGVAKASDLPPKFIHLTYRPESTPRRKLAIVGKGLTFDSGGYNIKGAGSGIEMMKTDMGGAAATLGAAKAIGLIKPDVEVHFISPVTENMISGRGMHPGDILTASNGKTIEVNNTDAEGRLTLADALVFADGLGVDAIVDLATLTGACIIALGDDIAGLWSPSDDLAEQLLQAGKAAGEKLWRLPLEEPYLDGLKSPVADYKNTGPRAGGSITAALFLKQFVKHPVWAHLDVAGPVWSDKEKHYNPAGATGYGVRTLVNWVLS.

Residues Lys256 and Asp261 each coordinate Mn(2+). Residue Lys268 is part of the active site. Residues Asp280, Asp339, and Glu341 each contribute to the Mn(2+) site. Arg343 is an active-site residue.

The protein belongs to the peptidase M17 family. The cofactor is Mn(2+).

It is found in the cytoplasm. The catalysed reaction is Release of an N-terminal amino acid, Xaa-|-Yaa-, in which Xaa is preferably Leu, but may be other amino acids including Pro although not Arg or Lys, and Yaa may be Pro. Amino acid amides and methyl esters are also readily hydrolyzed, but rates on arylamides are exceedingly low.. It carries out the reaction Release of an N-terminal amino acid, preferentially leucine, but not glutamic or aspartic acids.. In terms of biological role, presumably involved in the processing and regular turnover of intracellular proteins. Catalyzes the removal of unsubstituted N-terminal amino acids from various peptides. In Synechococcus sp. (strain ATCC 27144 / PCC 6301 / SAUG 1402/1) (Anacystis nidulans), this protein is Probable cytosol aminopeptidase.